A 199-amino-acid chain; its full sequence is Ribonuclease HII (199 aa).

The 190-residue stretch at 10 to 199 (RIEAGCDEAG…LLPEQLTLGF (190 aa)) folds into the RNase H type-2 domain. 3 residues coordinate a divalent metal cation: aspartate 16, glutamate 17, and aspartate 108.

The protein belongs to the RNase HII family. It depends on Mn(2+) as a cofactor. Mg(2+) is required as a cofactor.

Its subcellular location is the cytoplasm. The catalysed reaction is Endonucleolytic cleavage to 5'-phosphomonoester.. Endonuclease that specifically degrades the RNA of RNA-DNA hybrids. In Parabacteroides distasonis (strain ATCC 8503 / DSM 20701 / CIP 104284 / JCM 5825 / NCTC 11152), this protein is Ribonuclease HII.